We begin with the raw amino-acid sequence, 883 residues long: Brevican core protein (883 aa).

A signal peptide spans 1–22 (MIPLLLSLLAALVLTQAPAALA). Residues 35–154 (FRVRIGATQL…SSDAVEVKVK (120 aa)) form the Ig-like V-type domain. Disulfide bonds link cysteine 56–cysteine 136, cysteine 178–cysteine 249, cysteine 202–cysteine 223, cysteine 276–cysteine 351, and cysteine 300–cysteine 321. Asparagine 129 is a glycosylation site (N-linked (GlcNAc...) asparagine). Link domains are found at residues 156–251 (VVFL…YCYA) and 256–353 (GELF…YCFR). The residue at position 224 (serine 224) is a Phosphoserine. The N-linked (GlcNAc...) asparagine glycan is linked to asparagine 336. A disordered region spans residues 402 to 592 (SIPISEDGGG…LETPSEEKSG (191 aa)). Phosphoserine is present on serine 413. Serine 413 carries an O-linked (Xyl...) (chondroitin sulfate) serine glycan. 2 stretches are compositionally biased toward acidic residues: residues 440 to 451 (SSEEEGVALEEE) and 459 to 468 (ALEEEKEQED). Residues 479–495 (PLPTGSETEHSLSQVSP) show a composition bias toward polar residues. Residues 581-592 (RELETPSEEKSG) show a composition bias toward basic and acidic residues. Positions 622 to 658 (SSGDCIPSPCHNGGTCLEEKEGFRCLCLPGYGGDLCD) constitute an EGF-like domain. Disulfide bonds link cysteine 626-cysteine 637, cysteine 631-cysteine 646, cysteine 648-cysteine 657, cysteine 664-cysteine 675, cysteine 692-cysteine 784, cysteine 760-cysteine 776, cysteine 791-cysteine 834, and cysteine 820-cysteine 847. A C-type lectin domain is found at 658-786 (DVGLHFCSPG…NYHLSYTCKM (129 aa)). The region spanning 789–849 (VSCGPPPQLP…WEAPQISCVP (61 aa)) is the Sushi domain. Positions 854-883 (RALRSMDAPEGPRGQLSRHRKAPLTPPSSL) are disordered.

The protein belongs to the aggrecan/versican proteoglycan family. As to quaternary structure, interacts with TNR. Post-translationally, O-glycosylated; contains chondroitin sulfate. As to expression, expressed in the retina, specifically around the inner and outer segments of photoreceptors, retinal pigment epithelium, outer plexiform layer, and the ganglion cell layer (at protein level). Brain. Expressed in the brainstem and cerebellum in a perineuronal net pattern.

The protein localises to the secreted. Its subcellular location is the extracellular space. The protein resides in the extracellular matrix. May play a role in the terminally differentiating and the adult nervous system during postnatal development. Could stabilize interactions between hyaluronan (HA) and brain proteoglycans. This is Brevican core protein (Bcan) from Mus musculus (Mouse).